The following is a 402-amino-acid chain: Zinc finger protein 586 (402 aa).

Positions 15 to 87 constitute a KRAB domain; sequence VTFEDVAVNF…DQGGHSGERP (73 aa). A C2H2-type 1; degenerate zinc finger spans residues 88 to 116; sequence YECGEYRKLFKNKSCLTEPRRDHKHRNVR. Residues 122 to 144 form a C2H2-type 2; degenerate zinc finger; sequence YECSKYGKLFHQKPTLHIHERFH. The C2H2-type 3; degenerate zinc-finger motif lies at 150-172; it reads YECSECGKSFHQSSSLLQRQTLH. C2H2-type zinc fingers lie at residues 178 to 200, 206 to 228, 234 to 256, 262 to 284, 290 to 312, 317 to 339, 345 to 367, and 373 to 395; these read YECI…RKVH, YECN…RRIH, YECS…LRVH, YECV…QRVH, YECS…QRVH, HECG…LRVH, and YECI…QRVH.

Belongs to the krueppel C2H2-type zinc-finger protein family.

The protein localises to the nucleus. May be involved in transcriptional regulation. This Homo sapiens (Human) protein is Zinc finger protein 586 (ZNF586).